The following is a 231-amino-acid chain: uncharacterized protein (231 aa).

The next 7 membrane-spanning stretches (helical) occupy residues Thr-26–Gln-46, Ser-56–Ala-76, Ala-84–Phe-104, Ile-112–Ile-132, Phe-142–Ser-162, Ser-163–Tyr-183, and Ile-206–Ile-226.

The protein belongs to the BI1 family.

Its subcellular location is the cell membrane. This is an uncharacterized protein from Deinococcus radiodurans (strain ATCC 13939 / DSM 20539 / JCM 16871 / CCUG 27074 / LMG 4051 / NBRC 15346 / NCIMB 9279 / VKM B-1422 / R1).